A 252-amino-acid polypeptide reads, in one-letter code: H-2 class II histocompatibility antigen, A-F beta chain (252 aa).

Positions 1 to 16 (AAVVVLMVLSSPGTEG) are cleaved as a signal peptide. Residues 17-109 (GNSERHFVSQ…VETPTSLRRL (93 aa)) are beta-1. The Extracellular portion of the chain corresponds to 17–213 (GNSERHFVSQ…RAQSESARSK (197 aa)). 2 cysteine pairs are disulfide-bonded: cysteine 31–cysteine 93 and cysteine 132–cysteine 188. The N-linked (GlcNAc...) asparagine glycan is linked to asparagine 35. The beta-2 stretch occupies residues 110–203 (EQPNVVISLS…SLKSPITVEW (94 aa)). The 89-residue stretch at 112–200 (PNVVISLSRT…EHPSLKSPIT (89 aa)) folds into the Ig-like C1-type domain. A connecting peptide region spans residues 204–213 (RAQSESARSK). A helical transmembrane segment spans residues 214 to 234 (MLSGIGGCVLGVIFLGLGLFI). Residues 235–252 (RYRSQKGPRGPPPAGLLQ) lie on the Cytoplasmic side of the membrane.

This sequence belongs to the MHC class II family. Ubiquitinated in immature dendritic cells leading to down-regulation of MHC class II.

Its subcellular location is the membrane. The sequence is that of H-2 class II histocompatibility antigen, A-F beta chain (H2-Ab1) from Mus musculus (Mouse).